The primary structure comprises 363 residues: Adenosine 3'-phospho 5'-phosphosulfate transporter 2 (363 aa).

A run of 10 helical transmembrane segments spans residues 39–59 (WLQFVLLSGAIFILYLGYGYM), 63–83 (IFKLPGMKPFGWTLTLIQFVI), 106–126 (IYGVIAFFTVATMGLSNASVG), 131–151 (PTQVIFKCCKLIPVLIGGILI), 157–177 (GWIDISAAILMSLGIIMFTLA), 187–206 (SRGYIMISGALLADAVIGNI), 231–251 (VFIFTYVVLSGEIFSAIPFFL), 257–277 (TFGYALIFSFLGYLGVNVVLT), 281–301 (VFGALVAVTVTTLRKALTIIL), and 310–330 (FTIEYVYAGSVVMLAIYLNLY).

It belongs to the nucleotide-sugar transporter family. SLC35B subfamily.

The protein resides in the golgi apparatus membrane. Its function is as follows. Mediates the transport of adenosine 3'-phospho 5'-phosphosulfate (PAPS), from cytosol into Golgi. PAPS is a universal sulfuryl donor for sulfation events that take place in the Golgi. The chain is Adenosine 3'-phospho 5'-phosphosulfate transporter 2 (pst-2) from Caenorhabditis briggsae.